A 325-amino-acid polypeptide reads, in one-letter code: Putative HTH-type transcriptional regulatory protein HQ_3058A (325 aa).

An HTH cro/C1-type domain is found at 132-186 (LADEREERGWSLGRLATELGVSRRTVSKYEDGMNASIEIAIQLEEVFDEPFSSPL). The H-T-H motif DNA-binding region spans 143–162 (LGRLATELGVSRRTVSKYED). The interval 189 to 211 (MEGAESVRDSEPTPDDPDPDADD) is disordered. The segment covering 200–211 (PTPDDPDPDADD) has biased composition (acidic residues).

This is Putative HTH-type transcriptional regulatory protein HQ_3058A from Haloquadratum walsbyi (strain DSM 16790 / HBSQ001).